We begin with the raw amino-acid sequence, 319 residues long: Class I histocompatibility antigen, Non-RT1.A alpha-1 chain (319 aa).

The first 24 residues, 1 to 24, serve as a signal peptide directing secretion; that stretch reads MGAMAPRTLLLLLAAVLAPTQTWA. The interval 25 to 114 is alpha-1; sequence GSHSLRYFHT…LLSYYNQSEG (90 aa). At 25 to 307 the chain is on the extracellular side; that stretch reads GSHSLRYFHT…WEPSPSTDSN (283 aa). N-linked (GlcNAc...) asparagine glycosylation is present at asparagine 110. The alpha-2 stretch occupies residues 115–206; the sequence is GSHTIQRMYG…ERGKETLLRS (92 aa). 2 cysteine pairs are disulfide-bonded: cysteine 125-cysteine 188 and cysteine 227-cysteine 283. Residues 207-298 form an alpha-3 region; it reads DPPEAHVTLH…GLPEPLSQRW (92 aa). Residues 209-295 form the Ig-like C1-type domain; that stretch reads PEAHVTLHPR…EHEGLPEPLS (87 aa). Residue asparagine 280 is glycosylated (N-linked (GlcNAc...) asparagine). Residues 299–307 form a connecting peptide region; it reads EPSPSTDSN. A helical transmembrane segment spans residues 308-319; the sequence is LLLLFLELWQFL.

This sequence belongs to the MHC class I family. In terms of assembly, heterodimer of an alpha chain and a beta chain (beta-2-microglobulin).

It is found in the membrane. Its function is as follows. Involved in the presentation of foreign antigens to the immune system. The protein is Class I histocompatibility antigen, Non-RT1.A alpha-1 chain (RT1-Aw2) of Rattus norvegicus (Rat).